The following is a 385-amino-acid chain: Methylthioribose-1-phosphate isomerase (385 aa).

The active-site Proton donor is Asp255.

Belongs to the eIF-2B alpha/beta/delta subunits family. MtnA subfamily.

The protein localises to the cytoplasm. It localises to the nucleus. It carries out the reaction 5-(methylsulfanyl)-alpha-D-ribose 1-phosphate = 5-(methylsulfanyl)-D-ribulose 1-phosphate. The protein operates within amino-acid biosynthesis; L-methionine biosynthesis via salvage pathway; L-methionine from S-methyl-5-thio-alpha-D-ribose 1-phosphate: step 1/6. Its function is as follows. Catalyzes the interconversion of methylthioribose-1-phosphate (MTR-1-P) into methylthioribulose-1-phosphate (MTRu-1-P). This chain is Methylthioribose-1-phosphate isomerase (mri1), found in Aspergillus clavatus (strain ATCC 1007 / CBS 513.65 / DSM 816 / NCTC 3887 / NRRL 1 / QM 1276 / 107).